Consider the following 454-residue polypeptide: tRNA modification GTPase MnmE (454 aa).

3 residues coordinate (6S)-5-formyl-5,6,7,8-tetrahydrofolate: Arg23, Glu80, and Lys120. The region spanning 216–377 (GMKVVIAGRP…LRNHLKQSMG (162 aa)) is the TrmE-type G domain. Asn226 serves as a coordination point for K(+). GTP contacts are provided by residues 226–231 (NAGKSS), 245–251 (TDIAGTT), 270–273 (DTAG), 335–338 (NKAD), and 358–360 (SAR). A Mg(2+)-binding site is contributed by Ser230. K(+)-binding residues include Thr245, Ile247, and Thr250. Thr251 is a binding site for Mg(2+). Lys454 contacts (6S)-5-formyl-5,6,7,8-tetrahydrofolate.

It belongs to the TRAFAC class TrmE-Era-EngA-EngB-Septin-like GTPase superfamily. TrmE GTPase family. As to quaternary structure, homodimer. Heterotetramer of two MnmE and two MnmG subunits. The cofactor is K(+).

Its subcellular location is the cytoplasm. Functionally, exhibits a very high intrinsic GTPase hydrolysis rate. Involved in the addition of a carboxymethylaminomethyl (cmnm) group at the wobble position (U34) of certain tRNAs, forming tRNA-cmnm(5)s(2)U34. The sequence is that of tRNA modification GTPase MnmE from Shigella flexneri serotype 5b (strain 8401).